A 329-amino-acid polypeptide reads, in one-letter code: CDP-6-deoxy-L-threo-D-glycero-4-hexulose-3-dehydrase reductase (329 aa).

A 2Fe-2S ferredoxin-type domain is found at 2–93; sequence SLNVKLHPSG…ELDVNYYPEL (92 aa). C37, C42, C45, and C75 together coordinate [2Fe-2S] cluster. In terms of domain architecture, FAD-binding FR-type spans 98 to 197; the sequence is KKTYPCKLDS…EGPQGTFFVR (100 aa).

As to quaternary structure, monomer.

It participates in nucleotide-sugar biosynthesis; CDP-ascarylose biosynthesis. It functions in the pathway bacterial outer membrane biogenesis; lipopolysaccharide biosynthesis. Participates in the conversion of CDP-6-deoxy-D-glycero-L-threo-4-hexulose to 3,6-dideoxy-D-glycero-D-glycero-4-hexulose together with CDP-6-deoxy-D-glycero-L-threo-4-hexulose-3-dehydrase (E1) in two consecutive steps. The detailed mechanism of E3 is not yet resolved. This chain is CDP-6-deoxy-L-threo-D-glycero-4-hexulose-3-dehydrase reductase (ascD), found in Yersinia pseudotuberculosis serotype I (strain IP32953).